The primary structure comprises 551 residues: Glucans biosynthesis protein D (551 aa).

Residues 1-32 (MDRRRFIKGSMAMAAVCGTSGIASLFSQAAFA) constitute a signal peptide (tat-type signal).

Belongs to the OpgD/OpgG family. Post-translationally, predicted to be exported by the Tat system. The position of the signal peptide cleavage has not been experimentally proven.

The protein resides in the periplasm. Its pathway is glycan metabolism; osmoregulated periplasmic glucan (OPG) biosynthesis. Probably involved in the control of the structural glucose backbone of osmoregulated periplasmic glucans (OPGs). In Escherichia coli O1:K1 / APEC, this protein is Glucans biosynthesis protein D.